A 255-amino-acid polypeptide reads, in one-letter code: 4-hydroxy-tetrahydrodipicolinate reductase (255 aa).

NAD(+) contacts are provided by residues Gly-9–Met-14, Gly-89–Thr-91, and Ala-115–Phe-118. His-145 acts as the Proton donor/acceptor in catalysis. Residue His-146 coordinates (S)-2,3,4,5-tetrahydrodipicolinate. The active-site Proton donor is Lys-149. Position 155–156 (Gly-155–Thr-156) interacts with (S)-2,3,4,5-tetrahydrodipicolinate.

It belongs to the DapB family.

The protein localises to the cytoplasm. It carries out the reaction (S)-2,3,4,5-tetrahydrodipicolinate + NAD(+) + H2O = (2S,4S)-4-hydroxy-2,3,4,5-tetrahydrodipicolinate + NADH + H(+). It catalyses the reaction (S)-2,3,4,5-tetrahydrodipicolinate + NADP(+) + H2O = (2S,4S)-4-hydroxy-2,3,4,5-tetrahydrodipicolinate + NADPH + H(+). It functions in the pathway amino-acid biosynthesis; L-lysine biosynthesis via DAP pathway; (S)-tetrahydrodipicolinate from L-aspartate: step 4/4. In terms of biological role, catalyzes the conversion of 4-hydroxy-tetrahydrodipicolinate (HTPA) to tetrahydrodipicolinate. This chain is 4-hydroxy-tetrahydrodipicolinate reductase, found in Streptococcus gordonii (strain Challis / ATCC 35105 / BCRC 15272 / CH1 / DL1 / V288).